We begin with the raw amino-acid sequence, 317 residues long: 4-hydroxy-3-methylbut-2-enyl diphosphate reductase (317 aa).

Cysteine 12 serves as a coordination point for [4Fe-4S] cluster. Positions 41 and 74 each coordinate (2E)-4-hydroxy-3-methylbut-2-enyl diphosphate. Positions 41 and 74 each coordinate dimethylallyl diphosphate. Positions 41 and 74 each coordinate isopentenyl diphosphate. Position 97 (cysteine 97) interacts with [4Fe-4S] cluster. Histidine 125 contributes to the (2E)-4-hydroxy-3-methylbut-2-enyl diphosphate binding site. Dimethylallyl diphosphate is bound at residue histidine 125. Residue histidine 125 coordinates isopentenyl diphosphate. Glutamate 127 acts as the Proton donor in catalysis. Threonine 168 is a (2E)-4-hydroxy-3-methylbut-2-enyl diphosphate binding site. Residue cysteine 198 coordinates [4Fe-4S] cluster. Residues serine 226, serine 227, asparagine 228, and serine 270 each contribute to the (2E)-4-hydroxy-3-methylbut-2-enyl diphosphate site. Serine 226, serine 227, asparagine 228, and serine 270 together coordinate dimethylallyl diphosphate. Isopentenyl diphosphate is bound by residues serine 226, serine 227, asparagine 228, and serine 270.

It belongs to the IspH family. In terms of assembly, homodimer. [4Fe-4S] cluster is required as a cofactor.

The catalysed reaction is isopentenyl diphosphate + 2 oxidized [2Fe-2S]-[ferredoxin] + H2O = (2E)-4-hydroxy-3-methylbut-2-enyl diphosphate + 2 reduced [2Fe-2S]-[ferredoxin] + 2 H(+). It carries out the reaction dimethylallyl diphosphate + 2 oxidized [2Fe-2S]-[ferredoxin] + H2O = (2E)-4-hydroxy-3-methylbut-2-enyl diphosphate + 2 reduced [2Fe-2S]-[ferredoxin] + 2 H(+). It participates in isoprenoid biosynthesis; dimethylallyl diphosphate biosynthesis; dimethylallyl diphosphate from (2E)-4-hydroxy-3-methylbutenyl diphosphate: step 1/1. It functions in the pathway isoprenoid biosynthesis; isopentenyl diphosphate biosynthesis via DXP pathway; isopentenyl diphosphate from 1-deoxy-D-xylulose 5-phosphate: step 6/6. In terms of biological role, catalyzes the conversion of 1-hydroxy-2-methyl-2-(E)-butenyl 4-diphosphate (HMBPP) into a mixture of isopentenyl diphosphate (IPP) and dimethylallyl diphosphate (DMAPP). Acts in the terminal step of the DOXP/MEP pathway for isoprenoid precursor biosynthesis. The sequence is that of 4-hydroxy-3-methylbut-2-enyl diphosphate reductase from Yersinia pseudotuberculosis serotype IB (strain PB1/+).